An 818-amino-acid chain; its full sequence is MTDTRRRVKVYTLNEDRQWDDRGTGHVSSGYVERFKGTSLLVRAESDGSLLLESKINPNTAYQKQQDTLIVWSEAENYDLALSFQEKAGCDEIWEKICQVQGKDPSVDITQDVVDESEDERFDDMSSPGLELPPCELNRLEDLAELVASSLPSPLRREKLALAVENEGYIRKLLDLFHVCEDLENREGLHHIYEIIKGIFLLNRTALFEVMFSDECIMDVIGCLEFDPALPQPRRHREFLTKTAHFKEVIPISDPELRQKIHQTYRVQYIQDMVLPTPSVFEENMLSTLHSFIFFNKVEIVGMLQDDEKFLTDLFAQLTDEATDDDKRHELVNFLKEFCAFSQTLQPQNRDAFFKTLSNMGILPALEVILGMDDVQVRAAATDIFSYLVEYNPSMVREFVMQESQQNDDDILLINLIIEHMICDTDPELGGAVQLISLLRTLVDPENMLATANKTEKTEFLSFFYKHCMHVLSAPLLANTTEDKPSKDDFQTSQLLALILELLTFCVEHHTYHIKNYIINKDILRRVLVLTASKHAFLALCALRFMRRIIGLKDEFYNRYIMRNFLFEPVIKAFLNNGSRYNLMNSAIIEMFEYVRVEDVKSLTAHIVENYWKALEDVDYVQTFKGLKLRYEQQRERQDNPKLDSMRSILRNHRFRRDARTLEDEEEMWFNTDEDDLEDGETVVRTSDKIKTEEDLMEPISKFMERKKLKEPEDKEILAKSSFSGRQNPSFKLAFSGSTKTSLSSPPPSASLSPGSPGSPGSPGSGARSSPSNTSVTTKGGLVGLVDYPDDDEEEEDDDDEESKEEPLPPSKKSRLSS.

A WH1 domain is found at 1–100 (MTDTRRRVKV…DEIWEKICQV (100 aa)). Residues 718 to 818 (LAKSSFSGRQ…PPSKKSRLSS (101 aa)) are disordered. Over residues 721-730 (SSFSGRQNPS) the composition is skewed to polar residues. Positions 736–756 (SGSTKTSLSSPPPSASLSPGS) are enriched in low complexity. Over residues 788 to 804 (YPDDDEEEEDDDDEESK) the composition is skewed to acidic residues.

The protein belongs to the SMEK family. As to quaternary structure, serine/threonine-protein phosphatase 4 (PP4) occurs in different assemblies of the catalytic and one or more regulatory subunits.

Its function is as follows. Regulatory subunit of serine/threonine-protein phosphatase 4. This chain is Serine/threonine-protein phosphatase 4 regulatory subunit 3 (smek1), found in Tetraodon nigroviridis (Spotted green pufferfish).